Here is a 284-residue protein sequence, read N- to C-terminus: ATP synthase gamma chain (284 aa).

It belongs to the ATPase gamma chain family. F-type ATPases have 2 components, CF(1) - the catalytic core - and CF(0) - the membrane proton channel. CF(1) has five subunits: alpha(3), beta(3), gamma(1), delta(1), epsilon(1). CF(0) has three main subunits: a, b and c.

Its subcellular location is the cell membrane. In terms of biological role, produces ATP from ADP in the presence of a proton gradient across the membrane. The gamma chain is believed to be important in regulating ATPase activity and the flow of protons through the CF(0) complex. This is ATP synthase gamma chain from Bacillus licheniformis (strain ATCC 14580 / DSM 13 / JCM 2505 / CCUG 7422 / NBRC 12200 / NCIMB 9375 / NCTC 10341 / NRRL NRS-1264 / Gibson 46).